A 700-amino-acid chain; its full sequence is Pentatricopeptide repeat-containing protein At3g26540 (700 aa).

PPR repeat units lie at residues 95-125 (PIFLLNRAIEAYGKCGCVDDARELFEEMPER), 126-160 (DGGSWNAVITACAQNGVSDEVFRMFRRMNRDGVRA), 161-195 (TETSFAGVLKSCGLILDLRLLRQLHCAVVKYGYSG), 196-226 (NVDLETSIVDVYGKCRVMSDARRVFDEIVNP), 227-261 (SDVSWNVIVRRYLEMGFNDEAVVMFFKMLELNVRP), 262-296 (LNHTVSSVMLACSRSLALEVGKVIHAIAVKLSVVA), 297-327 (DTVVSTSVFDMYVKCDRLESARRVFDQTRSK), 328-362 (DLKSWTSAMSGYAMSGLTREARELFDLMPERNIVS), 363-389 (WNAMLGGYVHAHEWDEALDFLTLMRQE), 394-428 (DNVTLVWILNVCSGISDVQMGKQAHGFIYRHGYDT), 429-459 (NVIVANALLDMYGKCGTLQSANIWFRQMSEL), 461-495 (DEVSWNALLTGVARVGRSEQALSFFEGMQVEAKPS), 497-529 (YTLATLLAGCANIPALNLGKAIHGFLIRDGYKI), 530-560 (DVVIRGAMVDMYSKCRCFDYAIEVFKEAATR), 561-595 (DLILWNSIIRGCCRNGRSKEVFELFMLLENEGVKP), 596-626 (DHVTFLGILQACIREGHVELGFQYFSSMSTK), and 632-662 (QVEHYDCMIELYCKYGCLHQLEEFLLLMPFD).

This sequence belongs to the PPR family. PCMP-A subfamily.

In Arabidopsis thaliana (Mouse-ear cress), this protein is Pentatricopeptide repeat-containing protein At3g26540 (PCMP-A5).